A 464-amino-acid chain; its full sequence is MEFLPLFHNLRGSRVLVVGGGEIALRKSRLLADAGAVLRVVAPQIEDQLRELVQGSGGELMLRGYQEADLDGCTLIIAATDDEPLNAQVSSDAKRRCVPVNVVDAPALCSVIFPAIVDRSPLVIAVSSGGDAPVLARLIRAKLETWIPSTYGQLAGLAARFRAQVKGLYPDVQQRRAFWEEVFQGPIADRQLAGQGDEAERLLIEKVNGAPPYAPGEVYLVGAGPGDPDLLTFRALRLMQQADVVLYDRLVAPAILELCRRDAERIYVGKRRADHAVPQDQINQQLVDLAKQGKRVLRLKGGDPFIFGRGGEEIEELAAHGIPFQVVPGITAASGCAAYAGIPLTHRDYAQSVRFITGHLKNGTSDLPWQDLVGPSQTLVFYMGLIGLPIICEQLIKHGRAADTPAALIQQGTTSNQRVFTGTLADLPRMVAEHEVHAPTLVIVGEVVVLREKLKWFEGAQSQV.

Residues 1–203 are precorrin-2 dehydrogenase /sirohydrochlorin ferrochelatase; it reads MEFLPLFHNL…GQGDEAERLL (203 aa). NAD(+)-binding positions include 22-23 and 43-44; these read EI and PQ. Ser-128 carries the post-translational modification Phosphoserine. The segment at 216-464 is uroporphyrinogen-III C-methyltransferase; the sequence is GEVYLVGAGP…KWFEGAQSQV (249 aa). Pro-225 serves as a coordination point for S-adenosyl-L-methionine. Asp-248 serves as the catalytic Proton acceptor. Catalysis depends on Lys-270, which acts as the Proton donor. Residues 301-303, Ile-306, 331-332, Met-383, and Gly-412 contribute to the S-adenosyl-L-methionine site; these read GGD and TA.

It in the N-terminal section; belongs to the precorrin-2 dehydrogenase / sirohydrochlorin ferrochelatase family. The protein in the C-terminal section; belongs to the precorrin methyltransferase family.

The catalysed reaction is uroporphyrinogen III + 2 S-adenosyl-L-methionine = precorrin-2 + 2 S-adenosyl-L-homocysteine + H(+). It carries out the reaction precorrin-2 + NAD(+) = sirohydrochlorin + NADH + 2 H(+). It catalyses the reaction siroheme + 2 H(+) = sirohydrochlorin + Fe(2+). Its pathway is cofactor biosynthesis; adenosylcobalamin biosynthesis; precorrin-2 from uroporphyrinogen III: step 1/1. It participates in cofactor biosynthesis; adenosylcobalamin biosynthesis; sirohydrochlorin from precorrin-2: step 1/1. It functions in the pathway porphyrin-containing compound metabolism; siroheme biosynthesis; precorrin-2 from uroporphyrinogen III: step 1/1. The protein operates within porphyrin-containing compound metabolism; siroheme biosynthesis; siroheme from sirohydrochlorin: step 1/1. Its pathway is porphyrin-containing compound metabolism; siroheme biosynthesis; sirohydrochlorin from precorrin-2: step 1/1. Its function is as follows. Multifunctional enzyme that catalyzes the SAM-dependent methylations of uroporphyrinogen III at position C-2 and C-7 to form precorrin-2 via precorrin-1. Then it catalyzes the NAD-dependent ring dehydrogenation of precorrin-2 to yield sirohydrochlorin. Finally, it catalyzes the ferrochelation of sirohydrochlorin to yield siroheme. The polypeptide is Siroheme synthase (Pseudomonas fluorescens (strain SBW25)).